Reading from the N-terminus, the 209-residue chain is Fibroblast growth factor 21 (209 aa).

A signal peptide spans 1–28 (MDSDETGFEHSGLWVSVLAGLLLGACQA). Positions 143–209 (PLHLPGNKSP…SQGRSPSYAS (67 aa)) are disordered. Positions 168–186 (PGLPPALPEPPGILAPQPP) are enriched in pro residues.

It belongs to the heparin-binding growth factors family. Interacts (via C-terminus) with KLB; this interaction is direct. Interacts with FGFR4.

It localises to the secreted. Functionally, stimulates glucose uptake in differentiated adipocytes via the induction of glucose transporter SLC2A1/GLUT1 expression (but not SLC2A4/GLUT4 expression). Activity requires the presence of KLB. Regulates systemic glucose homeostasis and insulin sensitivity. This is Fibroblast growth factor 21 (FGF21) from Homo sapiens (Human).